Reading from the N-terminus, the 277-residue chain is MTPATPLNLLISNDDGISALGIRTLANTLAEAGHQVTVVCPDRERSATGHGLTLHRPIRTEIVEGIFDPRVTAWSCSGTPSDCVKFALSAVLKERPDFVLSGINHGSNLGTDVLYSGTVSAAMEGLLEGIHSIALSLADYTSHNFQPAADFAVKLLCQLMEKRPHWAIANQDAPVLLNINVPNLEKEKLAGVKITRQGLRRYIEQFQKRQDPRGKTYYWLSGEVIEELPQPDEPNIPLDFPTDVQAIAAGYITITPLQYIMNDLHRIQTLAQEDWQI.

Residues Asp14, Asp15, Ser46, and Asn104 each contribute to the a divalent metal cation site.

The protein belongs to the SurE nucleotidase family. A divalent metal cation is required as a cofactor.

The protein localises to the cytoplasm. It catalyses the reaction a ribonucleoside 5'-phosphate + H2O = a ribonucleoside + phosphate. Its function is as follows. Nucleotidase that shows phosphatase activity on nucleoside 5'-monophosphates. The chain is 5'-nucleotidase SurE from Picosynechococcus sp. (strain ATCC 27264 / PCC 7002 / PR-6) (Agmenellum quadruplicatum).